A 274-amino-acid polypeptide reads, in one-letter code: Formamidopyrimidine-DNA glycosylase (274 aa).

Residue Pro-2 is the Schiff-base intermediate with DNA of the active site. The active-site Proton donor is the Glu-3. The active-site Proton donor; for beta-elimination activity is the Lys-60. The DNA site is built by His-93 and Arg-112. The FPG-type zinc-finger motif lies at 240 to 274; that stretch reads FVYGRKGEPCKRCGTPIEKTVVAGRGTHYCPRCQR. Arg-264 functions as the Proton donor; for delta-elimination activity in the catalytic mechanism.

Belongs to the FPG family. In terms of assembly, monomer. It depends on Zn(2+) as a cofactor.

It catalyses the reaction Hydrolysis of DNA containing ring-opened 7-methylguanine residues, releasing 2,6-diamino-4-hydroxy-5-(N-methyl)formamidopyrimidine.. The catalysed reaction is 2'-deoxyribonucleotide-(2'-deoxyribose 5'-phosphate)-2'-deoxyribonucleotide-DNA = a 3'-end 2'-deoxyribonucleotide-(2,3-dehydro-2,3-deoxyribose 5'-phosphate)-DNA + a 5'-end 5'-phospho-2'-deoxyribonucleoside-DNA + H(+). Involved in base excision repair of DNA damaged by oxidation or by mutagenic agents. Acts as a DNA glycosylase that recognizes and removes damaged bases. Has a preference for oxidized purines, such as 7,8-dihydro-8-oxoguanine (8-oxoG). Has AP (apurinic/apyrimidinic) lyase activity and introduces nicks in the DNA strand. Cleaves the DNA backbone by beta-delta elimination to generate a single-strand break at the site of the removed base with both 3'- and 5'-phosphates. The sequence is that of Formamidopyrimidine-DNA glycosylase from Geobacillus kaustophilus (strain HTA426).